The chain runs to 312 residues: DNA-directed RNA polymerase subunit alpha (312 aa).

Residues 1-229 (MLQYQIDRIE…ELFQPLATVT (229 aa)) are alpha N-terminal domain (alpha-NTD). The segment at 239 to 312 (EPTAEAQIPL…IQIPQSRTSA (74 aa)) is alpha C-terminal domain (alpha-CTD).

Belongs to the RNA polymerase alpha chain family. As to quaternary structure, in cyanobacteria the RNAP catalytic core is composed of 2 alpha, 1 beta, 1 beta', 1 gamma and 1 omega subunit. When a sigma factor is associated with the core the holoenzyme is formed, which can initiate transcription.

The catalysed reaction is RNA(n) + a ribonucleoside 5'-triphosphate = RNA(n+1) + diphosphate. DNA-dependent RNA polymerase catalyzes the transcription of DNA into RNA using the four ribonucleoside triphosphates as substrates. This Synechococcus sp. (strain WH7803) protein is DNA-directed RNA polymerase subunit alpha.